The following is a 595-amino-acid chain: Aspartate--tRNA(Asp/Asn) ligase (595 aa).

An L-aspartate-binding site is contributed by Glu-175. The tract at residues 199 to 202 is aspartate; it reads QQYK. 2 residues coordinate L-aspartate: Arg-221 and His-454. 221–223 lines the ATP pocket; sequence RDE. Position 488 (Glu-488) interacts with ATP. Residue Arg-495 coordinates L-aspartate. 540-543 is a binding site for ATP; the sequence is GIDR.

This sequence belongs to the class-II aminoacyl-tRNA synthetase family. Type 1 subfamily. Homodimer.

The protein resides in the cytoplasm. The catalysed reaction is tRNA(Asx) + L-aspartate + ATP = L-aspartyl-tRNA(Asx) + AMP + diphosphate. Its function is as follows. Aspartyl-tRNA synthetase with relaxed tRNA specificity since it is able to aspartylate not only its cognate tRNA(Asp) but also tRNA(Asn). Reaction proceeds in two steps: L-aspartate is first activated by ATP to form Asp-AMP and then transferred to the acceptor end of tRNA(Asp/Asn). In Brucella anthropi (strain ATCC 49188 / DSM 6882 / CCUG 24695 / JCM 21032 / LMG 3331 / NBRC 15819 / NCTC 12168 / Alc 37) (Ochrobactrum anthropi), this protein is Aspartate--tRNA(Asp/Asn) ligase.